Here is a 107-residue protein sequence, read N- to C-terminus: Chlorobenzene dioxygenase, ferredoxin component (107 aa).

Residues 4–99 form the Rieske domain; that stretch reads TYIMRQSDLP…IKVEGGDVHV (96 aa). [2Fe-2S] cluster is bound by residues cysteine 43, histidine 45, cysteine 62, and histidine 65.

It belongs to the bacterial ring-hydroxylating dioxygenase ferredoxin component family. As to quaternary structure, this dioxygenase system consists of four proteins: the two subunits of the oxygenase component (TecA1 and TecA2), a ferredoxin (TecA3) and a ferredoxin reductase (TecA4). Requires [2Fe-2S] cluster as cofactor.

It functions in the pathway aromatic compound metabolism. Its function is as follows. Part of the chlorobenzene dioxygenase system that catalyzes the dihydroxylation of a range of aromatic compounds, including chlorinated benzenes and toluenes, and dinuclear aromatics such as biphenyl and dibenzo-p-dioxin. The sequence is that of Chlorobenzene dioxygenase, ferredoxin component from Cupriavidus sp. (strain PS12).